A 587-amino-acid polypeptide reads, in one-letter code: FAD-dependent monooxygenase ankC (587 aa).

The chain crosses the membrane as a helical span at residues A7 to A27. FAD is bound by residues Y245 and D311.

This sequence belongs to the PheA/TfdB FAD monooxygenase family. As to quaternary structure, homodimer. FAD serves as cofactor.

It localises to the membrane. The catalysed reaction is cyclo(L-arginyl-L-dehydrotyrosyl) + AH2 + O2 = cyclo(L-arginyl-(Z)-dehydro-3,4-dihydroxytyrosyl) + A + H2O. It participates in secondary metabolite biosynthesis. Functionally, FAD-dependent monooxygenase; part of the ank cluster that mediates the biosynthesis of NK13650 C, a highly modified cyclo-arginine-tyrosine dipeptide. AnkC uses as substrate the dehydro-cyclodipeptide intermediate generated by the monooxygase ankB and acts as a hydroxylase that installs the m-OH through a canonical flavin-dependent aromatic hydroxylation mechanism. Within the pathway, the cyclodipeptide synthase ankA acts as the scaffold-generating enzyme and is responsible for formation of the cyclo-Arg-Tyr diketopiperazine (cRY) from L-Arg and L-Tyr. The ankA product cRY is desaturated by the cytochrome P450 monooxygenase ankB to yield a dehydro-cyclodipeptide intermediate. The FAD-dependent monooxygenase ankC then installs the m-OH, ankD catalyzes the attachment of L-homoserine, and ankE ligates citrate to the ankD product to yield NK13650 B. The O-methyltransferase ankF is responsible for methylation of the C-17 phenol group of NK13650 B to produce NK13650 D. Amidation of NK13650 D with L-Asp by ankG then leads to the production of NK13650 C, whereas amidation of NK13650 B produces NK13650 A. This chain is FAD-dependent monooxygenase ankC, found in Aspergillus thermomutatus (Neosartorya pseudofischeri).